Consider the following 639-residue polypeptide: ATP-dependent zinc metalloprotease FtsH (639 aa).

At 1 to 15 the chain is on the cytoplasmic side; it reads MDNEKQASPPPAAPP. The chain crosses the membrane as a helical span at residues 16–36; sequence LNWRYLLWIILLGIFLISWLG. Residues 37–123 are Periplasmic-facing; that stretch reads NAGRQAGDEI…VQAKSEEPSL (87 aa). The helical transmembrane segment at 124-144 threads the bilayer; that stretch reads WMQAIIGILPWFLILGLIFYV. The Cytoplasmic portion of the chain corresponds to 145–639; the sequence is SYRMQQRMMG…HNEAVATGAG (495 aa). 221–228 lines the ATP pocket; that stretch reads GRPGTGKT. His-442 contacts Zn(2+). Residue Glu-443 is part of the active site. Residues His-446 and Asp-518 each contribute to the Zn(2+) site.

In the central section; belongs to the AAA ATPase family. This sequence in the C-terminal section; belongs to the peptidase M41 family. Homohexamer. It depends on Zn(2+) as a cofactor.

The protein localises to the cell inner membrane. Its function is as follows. Acts as a processive, ATP-dependent zinc metallopeptidase for both cytoplasmic and membrane proteins. Plays a role in the quality control of integral membrane proteins. This is ATP-dependent zinc metalloprotease FtsH from Nitrosococcus oceani (strain ATCC 19707 / BCRC 17464 / JCM 30415 / NCIMB 11848 / C-107).